The following is a 246-amino-acid chain: Anamorsin homolog (246 aa).

The interval 1 to 124 is N-terminal SAM-like domain; that stretch reads MRVVVVDLDG…ARGTAFSLKS (124 aa). The segment at 125–158 is linker; it reads RAVRVVTADAGWGADADVDDELIDESALLTELDV. [2Fe-2S] cluster contacts are provided by Cys-168, Cys-177, Cys-180, and Cys-182. Positions 168–182 are fe-S binding site A; it reads CDVGAGKKACKNCTC. [4Fe-4S] cluster-binding residues include Cys-206, Cys-209, Cys-217, and Cys-220. 2 short sequence motifs (cx2C motif) span residues 206-209 and 217-220; these read CGNC and CAGC. A fe-S binding site B region spans residues 206-220; it reads CGNCALGDAFRCAGC.

This sequence belongs to the anamorsin family. Monomer. It depends on [2Fe-2S] cluster as a cofactor. [4Fe-4S] cluster is required as a cofactor.

The protein resides in the cytoplasm. It localises to the mitochondrion intermembrane space. Functionally, component of the cytosolic iron-sulfur (Fe-S) protein assembly (CIA) machinery. Required for the maturation of extramitochondrial Fe-S proteins. Part of an electron transfer chain functioning in an early step of cytosolic Fe-S biogenesis, facilitating the de novo assembly of a [4Fe-4S] cluster on the cytosolic Fe-S scaffold complex. Electrons are transferred from NADPH via a FAD- and FMN-containing diflavin oxidoreductase. Together with the diflavin oxidoreductase, also required for the assembly of the diferric tyrosyl radical cofactor of ribonucleotide reductase (RNR), probably by providing electrons for reduction during radical cofactor maturation in the catalytic small subunit. The polypeptide is Anamorsin homolog (Ostreococcus tauri).